Reading from the N-terminus, the 88-residue chain is Class II hydrophobin 1 (88 aa).

Positions 1-15 (MKFFIATIFATGALA) are cleaved as a signal peptide. Disulfide bonds link C19-C69, C29-C59, C30-C42, and C70-C81.

The protein belongs to the cerato-ulmin hydrophobin family. Homodimer. Homodimers further self-assemble to form highly ordered films at water-air interfaces through intermolecular interactions.

The protein resides in the secreted. Its subcellular location is the cell wall. Aerial growth, conidiation, and dispersal of filamentous fungi in the environment rely upon a capability of their secreting small amphipathic proteins called hydrophobins (HPBs) with low sequence identity. Class I can self-assemble into an outermost layer of rodlet bundles on aerial cell surfaces, conferring cellular hydrophobicity that supports fungal growth, development and dispersal; whereas Class II form highly ordered films at water-air interfaces through intermolecular interactions but contribute nothing to the rodlet structure. The protein is Class II hydrophobin 1 of Trichoderma asperellum (strain ATCC 204424 / CBS 433.97 / NBRC 101777).